Consider the following 459-residue polypeptide: tRNA modification GTPase MnmE (459 aa).

(6S)-5-formyl-5,6,7,8-tetrahydrofolate-binding residues include arginine 29, glutamate 91, and arginine 130. The 157-residue stretch at 225 to 381 (GVKVAIVGRP…LEEALEQLVT (157 aa)) folds into the TrmE-type G domain. Asparagine 235 is a binding site for K(+). Residues 235-240 (NVGKSS), 254-260 (TDLPGTT), and 279-282 (DTAG) contribute to the GTP site. Serine 239 is a binding site for Mg(2+). The K(+) site is built by threonine 254, leucine 256, and threonine 259. Position 260 (threonine 260) interacts with Mg(2+). Lysine 459 is a (6S)-5-formyl-5,6,7,8-tetrahydrofolate binding site.

The protein belongs to the TRAFAC class TrmE-Era-EngA-EngB-Septin-like GTPase superfamily. TrmE GTPase family. In terms of assembly, homodimer. Heterotetramer of two MnmE and two MnmG subunits. It depends on K(+) as a cofactor.

The protein resides in the cytoplasm. Its function is as follows. Exhibits a very high intrinsic GTPase hydrolysis rate. Involved in the addition of a carboxymethylaminomethyl (cmnm) group at the wobble position (U34) of certain tRNAs, forming tRNA-cmnm(5)s(2)U34. This Synechococcus sp. (strain JA-2-3B'a(2-13)) (Cyanobacteria bacterium Yellowstone B-Prime) protein is tRNA modification GTPase MnmE.